The following is an 89-amino-acid chain: Small ribosomal subunit protein uS15 (89 aa).

It belongs to the universal ribosomal protein uS15 family. As to quaternary structure, part of the 30S ribosomal subunit. Forms a bridge to the 50S subunit in the 70S ribosome, contacting the 23S rRNA.

In terms of biological role, one of the primary rRNA binding proteins, it binds directly to 16S rRNA where it helps nucleate assembly of the platform of the 30S subunit by binding and bridging several RNA helices of the 16S rRNA. Its function is as follows. Forms an intersubunit bridge (bridge B4) with the 23S rRNA of the 50S subunit in the ribosome. The polypeptide is Small ribosomal subunit protein uS15 (Chromohalobacter salexigens (strain ATCC BAA-138 / DSM 3043 / CIP 106854 / NCIMB 13768 / 1H11)).